A 424-amino-acid polypeptide reads, in one-letter code: Protein-glutamate methylesterase/protein-glutamine glutaminase (424 aa).

Positions 6-123 constitute a Response regulatory domain; sequence RVLVVDDSAF…SLDDFTRQLT (118 aa). Residue Asp-57 is modified to 4-aspartylphosphate. A disordered region spans residues 177 to 210; sequence SRLSPGRSPGGKEGVAGAVSAGSTRGEAIRPGKG. Residues 229-423 enclose the CheB-type methylesterase domain; sequence RRPGIEVVAI…PAIVALVTGA (195 aa). Active-site residues include Ser-241, His-268, and Asp-365.

The protein belongs to the CheB family. Phosphorylated by CheA. Phosphorylation of the N-terminal regulatory domain activates the methylesterase activity.

Its subcellular location is the cytoplasm. It catalyses the reaction [protein]-L-glutamate 5-O-methyl ester + H2O = L-glutamyl-[protein] + methanol + H(+). The enzyme catalyses L-glutaminyl-[protein] + H2O = L-glutamyl-[protein] + NH4(+). Functionally, involved in chemotaxis. Part of a chemotaxis signal transduction system that modulates chemotaxis in response to various stimuli. Catalyzes the demethylation of specific methylglutamate residues introduced into the chemoreceptors (methyl-accepting chemotaxis proteins or MCP) by CheR. Also mediates the irreversible deamidation of specific glutamine residues to glutamic acid. The protein is Protein-glutamate methylesterase/protein-glutamine glutaminase of Moorella thermoacetica (strain ATCC 39073 / JCM 9320).